A 170-amino-acid polypeptide reads, in one-letter code: Flavodoxin (170 aa).

One can recognise a Flavodoxin-like domain in the interval 4 to 165 (IGLFYGTQTG…RIKTWVSQLK (162 aa)).

This sequence belongs to the flavodoxin family. FMN is required as a cofactor.

In terms of biological role, low-potential electron donor to a number of redox enzymes. This chain is Flavodoxin (isiB), found in Synechococcus elongatus (strain ATCC 33912 / PCC 7942 / FACHB-805) (Anacystis nidulans R2).